We begin with the raw amino-acid sequence, 534 residues long: Serine/threonine-protein kinase 35 (534 aa).

The disordered stretch occupies residues 32-176 (VESHGSLGAQ…AAAARAMDPV (145 aa)). 2 stretches are compositionally biased toward low complexity: residues 39-65 (GAQA…TSRA) and 166-176 (PAAAARAMDPV). The Protein kinase domain occupies 202-530 (YSLLAEIGRG…FELETRMDQV (329 aa)). Residues 208 to 216 (IGRGSYGVV) and Lys-231 each bind ATP. Asp-360 functions as the Proton acceptor in the catalytic mechanism.

This sequence belongs to the protein kinase superfamily. Ser/Thr protein kinase family. As to quaternary structure, interacts with PDLIM1/CLP-36. Autophosphorylated. As to expression, expressed in testis.

It localises to the nucleus. Its subcellular location is the nucleolus. The protein resides in the cytoplasm. The catalysed reaction is L-seryl-[protein] + ATP = O-phospho-L-seryl-[protein] + ADP + H(+). It catalyses the reaction L-threonyl-[protein] + ATP = O-phospho-L-threonyl-[protein] + ADP + H(+). The polypeptide is Serine/threonine-protein kinase 35 (STK35) (Homo sapiens (Human)).